A 245-amino-acid chain; its full sequence is Demethylmenaquinone methyltransferase (245 aa).

Residues T70, D90, and 118–119 (DC) contribute to the S-adenosyl-L-methionine site.

This sequence belongs to the class I-like SAM-binding methyltransferase superfamily. MenG/UbiE family.

The enzyme catalyses a 2-demethylmenaquinol + S-adenosyl-L-methionine = a menaquinol + S-adenosyl-L-homocysteine + H(+). It functions in the pathway quinol/quinone metabolism; menaquinone biosynthesis; menaquinol from 1,4-dihydroxy-2-naphthoate: step 2/2. Functionally, methyltransferase required for the conversion of demethylmenaquinol (DMKH2) to menaquinol (MKH2). The polypeptide is Demethylmenaquinone methyltransferase (Bacteroides fragilis (strain ATCC 25285 / DSM 2151 / CCUG 4856 / JCM 11019 / LMG 10263 / NCTC 9343 / Onslow / VPI 2553 / EN-2)).